The chain runs to 273 residues: Large ribosomal subunit protein uL2c (273 aa).

Disordered stretches follow at residues 30–55 and 222–243; these read EKKLTRGWSRAQGRNNKGRITTRHRG and GSAMNPVDHPHGGGEGKAPIGR. Basic residues predominate over residues 45 to 55; it reads NKGRITTRHRG.

The protein belongs to the universal ribosomal protein uL2 family. As to quaternary structure, part of the 50S ribosomal subunit.

The protein resides in the plastid. This Prototheca wickerhamii protein is Large ribosomal subunit protein uL2c (rpl2).